The primary structure comprises 289 residues: Nucleotide-binding protein Franean1_2060 (289 aa).

Residue 13–20 coordinates ATP; sequence GLSGAGRS. A GTP-binding site is contributed by 64–67; that stretch reads DVRG.

It belongs to the RapZ-like family.

Its function is as follows. Displays ATPase and GTPase activities. This Parafrankia sp. (strain EAN1pec) protein is Nucleotide-binding protein Franean1_2060.